A 318-amino-acid chain; its full sequence is Ribosomal RNA small subunit methyltransferase H (318 aa).

Residues 37–39 (GGH), Asp57, Phe83, Asp104, and Gln111 each bind S-adenosyl-L-methionine.

Belongs to the methyltransferase superfamily. RsmH family.

The protein localises to the cytoplasm. It carries out the reaction cytidine(1402) in 16S rRNA + S-adenosyl-L-methionine = N(4)-methylcytidine(1402) in 16S rRNA + S-adenosyl-L-homocysteine + H(+). Its function is as follows. Specifically methylates the N4 position of cytidine in position 1402 (C1402) of 16S rRNA. The polypeptide is Ribosomal RNA small subunit methyltransferase H (Neisseria gonorrhoeae (strain ATCC 700825 / FA 1090)).